The primary structure comprises 160 residues: Myosin catalytic light chain LC-1, mantle muscle (160 aa).

X1 carries the blocked amino end (Xaa) modification. EF-hand domains lie at 7-44, 83-118, and 119-153; these read DEIE…LGMN, TAAD…LGER, and ITED…VMAG.

Its function is as follows. In molluscan muscle, calcium regulation is associated with myosin rather than with actin. Muscle myosin contains two types of light chains: the catalytic light chain, essential for ATPase activity, and the regulatory light chain, a calcium-binding protein responsible for Ca(2+) dependent binding and Ca(2+) dependent Mg-ATPase activity. This chain is Myosin catalytic light chain LC-1, mantle muscle, found in Todarodes pacificus (Japanese flying squid).